Reading from the N-terminus, the 345-residue chain is D-fructose 1,6-bisphosphatase class 2/sedoheptulose 1,7-bisphosphatase (345 aa).

Asp-33, Glu-57, Asp-97, and Glu-100 together coordinate Mn(2+). Substrate is bound by residues 100 to 102 (EGT), Tyr-131, 176 to 178 (RPR), and 198 to 200 (DGD). Glu-225 serves as a coordination point for Mn(2+).

Belongs to the FBPase class 2 family. In terms of assembly, homotetramer. Mn(2+) serves as cofactor.

It carries out the reaction beta-D-fructose 1,6-bisphosphate + H2O = beta-D-fructose 6-phosphate + phosphate. The enzyme catalyses D-sedoheptulose 1,7-bisphosphate + H2O = D-sedoheptulose 7-phosphate + phosphate. It participates in carbohydrate biosynthesis; Calvin cycle. In terms of biological role, catalyzes the hydrolysis of fructose 1,6-bisphosphate (Fru 1,6-P2) and sedoheptulose 1,7-bisphosphate (Sed 1,7-P2) to fructose 6-phosphate and sedoheptulose 7-phosphate, respectively. This Microcystis aeruginosa (strain NIES-843 / IAM M-2473) protein is D-fructose 1,6-bisphosphatase class 2/sedoheptulose 1,7-bisphosphatase.